A 188-amino-acid chain; its full sequence is Large ribosomal subunit protein uL5 (188 aa).

It belongs to the universal ribosomal protein uL5 family. In terms of assembly, part of the 50S ribosomal subunit; contacts the 5S rRNA and probably tRNA. Forms a bridge to the 30S subunit in the 70S ribosome.

Its function is as follows. This is one of the proteins that bind and probably mediate the attachment of the 5S RNA into the large ribosomal subunit, where it forms part of the central protuberance. In the 70S ribosome it contacts protein S13 of the 30S subunit (bridge B1b), connecting the 2 subunits; this bridge is implicated in subunit movement. May contact the P site tRNA; the 5S rRNA and some of its associated proteins might help stabilize positioning of ribosome-bound tRNAs. The polypeptide is Large ribosomal subunit protein uL5 (Pyrococcus abyssi (strain GE5 / Orsay)).